Reading from the N-terminus, the 92-residue chain is Large ribosomal subunit protein eL43z (92 aa).

A C4-type zinc finger spans residues 39–60 (CEFCGKFAVKRKAVGIWGCKDC).

It belongs to the eukaryotic ribosomal protein eL43 family.

The chain is Large ribosomal subunit protein eL43z from Oryza sativa subsp. japonica (Rice).